We begin with the raw amino-acid sequence, 290 residues long: Ribosomal RNA small subunit methyltransferase A (290 aa).

6 residues coordinate S-adenosyl-L-methionine: Asn-27, Leu-29, Gly-54, Glu-75, Asp-100, and Asn-125.

It belongs to the class I-like SAM-binding methyltransferase superfamily. rRNA adenine N(6)-methyltransferase family. RsmA subfamily.

Its subcellular location is the cytoplasm. The catalysed reaction is adenosine(1518)/adenosine(1519) in 16S rRNA + 4 S-adenosyl-L-methionine = N(6)-dimethyladenosine(1518)/N(6)-dimethyladenosine(1519) in 16S rRNA + 4 S-adenosyl-L-homocysteine + 4 H(+). Its function is as follows. Specifically dimethylates two adjacent adenosines (A1518 and A1519) in the loop of a conserved hairpin near the 3'-end of 16S rRNA in the 30S particle. May play a critical role in biogenesis of 30S subunits. The polypeptide is Ribosomal RNA small subunit methyltransferase A (Streptococcus pneumoniae (strain ATCC 700669 / Spain 23F-1)).